The sequence spans 438 residues: 3-phosphoshikimate 1-carboxyvinyltransferase (438 aa).

3-phosphoshikimate contacts are provided by lysine 20, serine 21, and arginine 25. Lysine 20 serves as a coordination point for phosphoenolpyruvate. 2 residues coordinate phosphoenolpyruvate: glycine 90 and arginine 118. 6 residues coordinate 3-phosphoshikimate: serine 163, serine 164, glutamine 165, serine 191, aspartate 320, and lysine 347. Glutamine 165 provides a ligand contact to phosphoenolpyruvate. The Proton acceptor role is filled by aspartate 320. Residues arginine 351 and arginine 392 each coordinate phosphoenolpyruvate.

This sequence belongs to the EPSP synthase family. As to quaternary structure, monomer.

The protein resides in the cytoplasm. The enzyme catalyses 3-phosphoshikimate + phosphoenolpyruvate = 5-O-(1-carboxyvinyl)-3-phosphoshikimate + phosphate. Its pathway is metabolic intermediate biosynthesis; chorismate biosynthesis. In terms of biological role, catalyzes the transfer of the enolpyruvyl moiety of phosphoenolpyruvate (PEP) to the 5-hydroxyl of shikimate-3-phosphate (S3P) to produce enolpyruvyl shikimate-3-phosphate and inorganic phosphate. The chain is 3-phosphoshikimate 1-carboxyvinyltransferase from Natronomonas pharaonis (strain ATCC 35678 / DSM 2160 / CIP 103997 / JCM 8858 / NBRC 14720 / NCIMB 2260 / Gabara) (Halobacterium pharaonis).